The following is a 283-amino-acid chain: Shikimate dehydrogenase (NADP(+)) (283 aa).

Shikimate-binding positions include 16 to 18 (SLS) and Thr-63. Lys-67 serves as the catalytic Proton acceptor. Asp-79 provides a ligand contact to NADP(+). Residues Asn-88 and Asp-103 each coordinate shikimate. NADP(+)-binding positions include 128–132 (GAGGA), Ala-223, and Gly-243.

This sequence belongs to the shikimate dehydrogenase family. As to quaternary structure, homodimer.

The enzyme catalyses shikimate + NADP(+) = 3-dehydroshikimate + NADPH + H(+). It functions in the pathway metabolic intermediate biosynthesis; chorismate biosynthesis; chorismate from D-erythrose 4-phosphate and phosphoenolpyruvate: step 4/7. Involved in the biosynthesis of the chorismate, which leads to the biosynthesis of aromatic amino acids. Catalyzes the reversible NADPH linked reduction of 3-dehydroshikimate (DHSA) to yield shikimate (SA). The sequence is that of Shikimate dehydrogenase (NADP(+)) from Xanthomonas oryzae pv. oryzae (strain MAFF 311018).